A 246-amino-acid chain; its full sequence is Zinc import ATP-binding protein ZnuC (246 aa).

The region spanning 24–243 is the ABC transporter domain; it reads LKIENLALAY…RTLNEIFSSY (220 aa). Residue 56–63 participates in ATP binding; that stretch reads GPNGGGKT.

Belongs to the ABC transporter superfamily. Zinc importer (TC 3.A.1.15.5) family. The complex is composed of two ATP-binding proteins (ZnuC), two transmembrane proteins (ZnuB) and a solute-binding protein (ZnuA).

It is found in the cell membrane. It carries out the reaction Zn(2+)(out) + ATP(in) + H2O(in) = Zn(2+)(in) + ADP(in) + phosphate(in) + H(+)(in). In terms of biological role, part of the ABC transporter complex ZnuABC involved in zinc import. Responsible for energy coupling to the transport system. This Wolbachia pipientis wMel protein is Zinc import ATP-binding protein ZnuC.